A 312-amino-acid polypeptide reads, in one-letter code: Ribosomal protein L11 methyltransferase (312 aa).

Thr-163, Gly-184, Asp-206, and Asn-248 together coordinate S-adenosyl-L-methionine.

This sequence belongs to the methyltransferase superfamily. PrmA family.

It localises to the cytoplasm. The catalysed reaction is L-lysyl-[protein] + 3 S-adenosyl-L-methionine = N(6),N(6),N(6)-trimethyl-L-lysyl-[protein] + 3 S-adenosyl-L-homocysteine + 3 H(+). Functionally, methylates ribosomal protein L11. The chain is Ribosomal protein L11 methyltransferase from Clostridium botulinum (strain Okra / Type B1).